Here is a 139-residue protein sequence, read N- to C-terminus: ATP synthase epsilon chain (139 aa).

This sequence belongs to the ATPase epsilon chain family. In terms of assembly, F-type ATPases have 2 components, CF(1) - the catalytic core - and CF(0) - the membrane proton channel. CF(1) has five subunits: alpha(3), beta(3), gamma(1), delta(1), epsilon(1). CF(0) has three main subunits: a, b and c.

The protein localises to the cell membrane. Its function is as follows. Produces ATP from ADP in the presence of a proton gradient across the membrane. In Enterococcus faecalis (strain ATCC 700802 / V583), this protein is ATP synthase epsilon chain.